The chain runs to 104 residues: L-rhamnose mutarotase (104 aa).

Residue Tyr18 participates in substrate binding. Catalysis depends on His22, which acts as the Proton donor. Substrate-binding positions include Tyr41 and 76-77 (WW).

Belongs to the rhamnose mutarotase family. In terms of assembly, homodimer.

Its subcellular location is the cytoplasm. The enzyme catalyses alpha-L-rhamnose = beta-L-rhamnose. Its pathway is carbohydrate metabolism; L-rhamnose metabolism. Its function is as follows. Involved in the anomeric conversion of L-rhamnose. The polypeptide is L-rhamnose mutarotase (Enterobacter sp. (strain 638)).